The primary structure comprises 124 residues: Seripauperin-19 (124 aa).

The first 20 residues, 1 to 20 (MVKLTSIAAGVAAIAAGVAA), serve as a signal peptide directing secretion.

Belongs to the SRP1/TIP1 family. Seripauperin subfamily.

This chain is Seripauperin-19 (PAU19), found in Saccharomyces cerevisiae (strain ATCC 204508 / S288c) (Baker's yeast).